The following is a 153-amino-acid chain: MSKVGYTAEFDPATTAKAMAYEINVSPKHCQEICRQIRGMKLSAAKTYLQDVIDKKRSVPFKQHARNVGHKRHQSGWPSGRYPVKASTEILKLLKHAEANAEYKGLETENMRIIHSTSKKGRVIQGIMPRAMGRATAWNIELVTVEVVIGEVR.

It belongs to the universal ribosomal protein uL22 family. Part of the 50S ribosomal subunit.

This protein binds specifically to 23S rRNA. It makes multiple contacts with different domains of the 23S rRNA in the assembled 50S subunit and ribosome. Its function is as follows. The globular domain of the protein is located near the polypeptide exit tunnel on the outside of the subunit, while an extended beta-hairpin is found that lines the wall of the exit tunnel in the center of the 70S ribosome. In Methanocella arvoryzae (strain DSM 22066 / NBRC 105507 / MRE50), this protein is Large ribosomal subunit protein uL22.